A 445-amino-acid polypeptide reads, in one-letter code: ATP-dependent protease ATPase subunit HslU (445 aa).

ATP is bound by residues Ile17, 59 to 64 (GVGKTE), Asp254, Glu319, and Arg391.

It belongs to the ClpX chaperone family. HslU subfamily. A double ring-shaped homohexamer of HslV is capped on each side by a ring-shaped HslU homohexamer. The assembly of the HslU/HslV complex is dependent on binding of ATP.

Its subcellular location is the cytoplasm. Its function is as follows. ATPase subunit of a proteasome-like degradation complex; this subunit has chaperone activity. The binding of ATP and its subsequent hydrolysis by HslU are essential for unfolding of protein substrates subsequently hydrolyzed by HslV. HslU recognizes the N-terminal part of its protein substrates and unfolds these before they are guided to HslV for hydrolysis. This chain is ATP-dependent protease ATPase subunit HslU, found in Pseudomonas syringae pv. tomato (strain ATCC BAA-871 / DC3000).